Reading from the N-terminus, the 460-residue chain is A-type ATP synthase subunit B (460 aa).

Belongs to the ATPase alpha/beta chains family. In terms of assembly, has multiple subunits with at least A(3), B(3), C, D, E, F, H, I and proteolipid K(x).

The protein localises to the cell membrane. Component of the A-type ATP synthase that produces ATP from ADP in the presence of a proton gradient across the membrane. The B chain is a regulatory subunit. The sequence is that of A-type ATP synthase subunit B from Thermoplasma acidophilum (strain ATCC 25905 / DSM 1728 / JCM 9062 / NBRC 15155 / AMRC-C165).